Reading from the N-terminus, the 755-residue chain is Glucosylglycerol-phosphate synthase (755 aa).

This sequence belongs to the glycosyltransferase 20 family.

It carries out the reaction ADP-alpha-D-glucose + sn-glycerol 3-phosphate = 2-O-(alpha-D-glucopyranosyl)-sn-glycerol 3-phosphate + ADP + H(+). Its pathway is glycan metabolism; glucosylglycerol biosynthesis. In terms of biological role, involved in salt tolerance by producing GG-phosphate from ADP-glucose and glycerol-3-phosphate (G3P), an intermediate in the synthesis of the osmolyte glucosylglycerol (GG). The protein is Glucosylglycerol-phosphate synthase (ggpS) of Pseudomonas anguilliseptica.